We begin with the raw amino-acid sequence, 79 residues long: Acyl carrier protein (79 aa).

In terms of domain architecture, Carrier spans 2 to 77 (STIEERVKKI…QAIDYVKSHV (76 aa)). The residue at position 37 (Ser37) is an O-(pantetheine 4'-phosphoryl)serine.

The protein belongs to the acyl carrier protein (ACP) family. In terms of processing, 4'-phosphopantetheine is transferred from CoA to a specific serine of apo-ACP by AcpS. This modification is essential for activity because fatty acids are bound in thioester linkage to the sulfhydryl of the prosthetic group.

It is found in the cytoplasm. Its pathway is lipid metabolism; fatty acid biosynthesis. Functionally, carrier of the growing fatty acid chain in fatty acid biosynthesis. This chain is Acyl carrier protein, found in Xanthomonas oryzae pv. oryzae (strain MAFF 311018).